A 251-amino-acid polypeptide reads, in one-letter code: Triosephosphate isomerase (251 aa).

A substrate-binding site is contributed by 9 to 11; sequence NWK. Histidine 95 (electrophile) is an active-site residue. The active-site Proton acceptor is glutamate 167. Substrate contacts are provided by residues glycine 173, serine 213, and 234–235; that span reads GG.

The protein belongs to the triosephosphate isomerase family. As to quaternary structure, homodimer.

The protein resides in the cytoplasm. The catalysed reaction is D-glyceraldehyde 3-phosphate = dihydroxyacetone phosphate. Its pathway is carbohydrate biosynthesis; gluconeogenesis. It participates in carbohydrate degradation; glycolysis; D-glyceraldehyde 3-phosphate from glycerone phosphate: step 1/1. Involved in the gluconeogenesis. Catalyzes stereospecifically the conversion of dihydroxyacetone phosphate (DHAP) to D-glyceraldehyde-3-phosphate (G3P). The protein is Triosephosphate isomerase of Fusobacterium nucleatum subsp. nucleatum (strain ATCC 25586 / DSM 15643 / BCRC 10681 / CIP 101130 / JCM 8532 / KCTC 2640 / LMG 13131 / VPI 4355).